The primary structure comprises 437 residues: O-acetyl-L-homoserine sulfhydrylase (437 aa).

Lys-216 carries the post-translational modification N6-(pyridoxal phosphate)lysine.

This sequence belongs to the trans-sulfuration enzymes family. As to quaternary structure, homohexamer. It depends on pyridoxal 5'-phosphate as a cofactor.

The enzyme catalyses O-acetyl-L-homoserine + hydrogen sulfide = L-homocysteine + acetate. The catalysed reaction is O-acetyl-L-homoserine + methanethiol = L-methionine + acetate + H(+). The protein operates within amino-acid biosynthesis; L-methionine biosynthesis via de novo pathway; L-homocysteine from O-acetyl-L-homoserine: step 1/1. Its activity is regulated as follows. Inhibited by methionine and cystathionine. Functionally, catalyzes the conversion of O-acetyl-L-homoserine (OAH) into homocysteine in the methionine biosynthesis pathway. Can also use dimethyldisulfide and methanethiol as reduced sulfur sources, leading to the direct formation of methionine. Has weak cystathionine gamma-synthase activity. The polypeptide is O-acetyl-L-homoserine sulfhydrylase (Corynebacterium glutamicum (strain ATCC 13032 / DSM 20300 / JCM 1318 / BCRC 11384 / CCUG 27702 / LMG 3730 / NBRC 12168 / NCIMB 10025 / NRRL B-2784 / 534)).